The primary structure comprises 183 residues: Glutathione-regulated potassium-efflux system ancillary protein KefG (183 aa).

Belongs to the NAD(P)H dehydrogenase (quinone) family. KefG subfamily. Interacts with KefB.

It localises to the cell inner membrane. It catalyses the reaction a quinone + NADH + H(+) = a quinol + NAD(+). The enzyme catalyses a quinone + NADPH + H(+) = a quinol + NADP(+). Functionally, regulatory subunit of a potassium efflux system that confers protection against electrophiles. Required for full activity of KefB. This chain is Glutathione-regulated potassium-efflux system ancillary protein KefG, found in Yersinia pestis bv. Antiqua (strain Angola).